The primary structure comprises 260 residues: Flap endonuclease Xni (260 aa).

Asp105 lines the Mg(2+) pocket. The 5'-3' exonuclease domain occupies 164-259 (NQFLDLMALA…VNGPANTQQA (96 aa)). 5 residues coordinate K(+): Leu172, Ala173, Pro181, Ile183, and Ile186. Positions 185 to 190 (GIGPKS) are interaction with DNA.

It belongs to the Xni family. Requires Mg(2+) as cofactor. The cofactor is K(+).

In terms of biological role, has flap endonuclease activity. During DNA replication, flap endonucleases cleave the 5'-overhanging flap structure that is generated by displacement synthesis when DNA polymerase encounters the 5'-end of a downstream Okazaki fragment. The polypeptide is Flap endonuclease Xni (Shewanella sp. (strain MR-4)).